Here is a 324-residue protein sequence, read N- to C-terminus: Phospho-N-acetylmuramoyl-pentapeptide-transferase (324 aa).

Helical transmembrane passes span 5–25 (VMVL…PLFI), 50–70 (GTPT…TLLM), 77–97 (LSVE…LGFL), 117–137 (LIGQ…SGFS), 147–167 (LSIN…VGGS), 176–196 (LDGL…VLAW), 203–223 (IAIF…FNAH), 227–247 (VFMG…VAIL), 250–270 (LEIL…SVII), and 304–324 (VTFW…EVWI).

It belongs to the glycosyltransferase 4 family. MraY subfamily. It depends on Mg(2+) as a cofactor.

The protein localises to the cell membrane. It catalyses the reaction UDP-N-acetyl-alpha-D-muramoyl-L-alanyl-gamma-D-glutamyl-meso-2,6-diaminopimeloyl-D-alanyl-D-alanine + di-trans,octa-cis-undecaprenyl phosphate = di-trans,octa-cis-undecaprenyl diphospho-N-acetyl-alpha-D-muramoyl-L-alanyl-D-glutamyl-meso-2,6-diaminopimeloyl-D-alanyl-D-alanine + UMP. It functions in the pathway cell wall biogenesis; peptidoglycan biosynthesis. Functionally, catalyzes the initial step of the lipid cycle reactions in the biosynthesis of the cell wall peptidoglycan: transfers peptidoglycan precursor phospho-MurNAc-pentapeptide from UDP-MurNAc-pentapeptide onto the lipid carrier undecaprenyl phosphate, yielding undecaprenyl-pyrophosphoryl-MurNAc-pentapeptide, known as lipid I. In Geobacillus sp. (strain WCH70), this protein is Phospho-N-acetylmuramoyl-pentapeptide-transferase.